Consider the following 344-residue polypeptide: Dihydroorotate dehydrogenase (quinone) (344 aa).

FMN-binding positions include 65 to 69 (AGLDK) and threonine 89. A substrate-binding site is contributed by lysine 69. 114–118 (NRMGF) contacts substrate. Residues asparagine 145 and asparagine 178 each coordinate FMN. Asparagine 178 lines the substrate pocket. The active-site Nucleophile is the serine 181. Asparagine 183 contributes to the substrate binding site. Residues lysine 223 and threonine 251 each contribute to the FMN site. 252–253 (NT) contributes to the substrate binding site. Residues glycine 274, glycine 303, and 324-325 (YT) contribute to the FMN site.

The protein belongs to the dihydroorotate dehydrogenase family. Type 2 subfamily. Monomer. The cofactor is FMN.

It is found in the cell membrane. It carries out the reaction (S)-dihydroorotate + a quinone = orotate + a quinol. It functions in the pathway pyrimidine metabolism; UMP biosynthesis via de novo pathway; orotate from (S)-dihydroorotate (quinone route): step 1/1. Its function is as follows. Catalyzes the conversion of dihydroorotate to orotate with quinone as electron acceptor. This Ralstonia nicotianae (strain ATCC BAA-1114 / GMI1000) (Ralstonia solanacearum) protein is Dihydroorotate dehydrogenase (quinone).